The sequence spans 359 residues: 3-dehydroquinate synthase (359 aa).

NAD(+) contacts are provided by residues 69–74 (DGEQHK), 103–107 (GVIGD), 127–128 (TT), K140, K149, and 167–170 (TLDT). The Zn(2+) site is built by E182, H245, and H262.

This sequence belongs to the sugar phosphate cyclases superfamily. Dehydroquinate synthase family. Co(2+) is required as a cofactor. It depends on Zn(2+) as a cofactor. NAD(+) serves as cofactor.

It localises to the cytoplasm. It carries out the reaction 7-phospho-2-dehydro-3-deoxy-D-arabino-heptonate = 3-dehydroquinate + phosphate. It participates in metabolic intermediate biosynthesis; chorismate biosynthesis; chorismate from D-erythrose 4-phosphate and phosphoenolpyruvate: step 2/7. In terms of biological role, catalyzes the conversion of 3-deoxy-D-arabino-heptulosonate 7-phosphate (DAHP) to dehydroquinate (DHQ). This Nitrosococcus oceani (strain ATCC 19707 / BCRC 17464 / JCM 30415 / NCIMB 11848 / C-107) protein is 3-dehydroquinate synthase.